Reading from the N-terminus, the 529-residue chain is UDP-glucuronosyltransferase 2B7 (529 aa).

A signal peptide spans 1–23 (MSVKWTSVILLIQLSFCFSSGNC). Residues Asn67, Asn68, and Asn315 are each glycosylated (N-linked (GlcNAc...) asparagine). UDP-alpha-D-glucuronate is bound by residues 373-379 (THGGANG) and Asp398. The helical transmembrane segment at 493-509 (VIGFLLVCVATVIFIVT) threads the bilayer.

This sequence belongs to the UDP-glycosyltransferase family.

The protein localises to the endoplasmic reticulum membrane. It carries out the reaction glucuronate acceptor + UDP-alpha-D-glucuronate = acceptor beta-D-glucuronoside + UDP + H(+). The catalysed reaction is 17alpha-estradiol + UDP-alpha-D-glucuronate = 17alpha-estradiol 17-O-(beta-D-glucuronate) + UDP + H(+). It catalyses the reaction 17beta-estradiol + UDP-alpha-D-glucuronate = 17beta-estradiol 17-O-(beta-D-glucuronate) + UDP + H(+). The enzyme catalyses 2-hydroxy-17beta-estradiol + UDP-alpha-D-glucuronate = 2-hydroxy-17beta-estradiol 3-O-(beta-D-glucuronate) + UDP + H(+). It carries out the reaction 4-hydroxy-17beta-estradiol + UDP-alpha-D-glucuronate = 17beta-estradiol 4-O-(beta-D-glucuronate) + UDP + H(+). The catalysed reaction is 4-hydroxyestrone + UDP-alpha-D-glucuronate = estrone 4-O-(beta-D-glucuronate) + UDP + H(+). It catalyses the reaction 16alpha-hydroxyestrone + UDP-alpha-D-glucuronate = 16alpha-hydroxyestrone 16-O-(beta-D-glucuronate) + UDP + H(+). The enzyme catalyses 16alpha,17beta-estriol + UDP-alpha-D-glucuronate = 16alpha,17beta-estriol 16-O-(beta-D-glucuronate) + UDP + H(+). It carries out the reaction 16beta,17beta-estriol + UDP-alpha-D-glucuronate = 16beta,17beta-estriol 16-O-(beta-D-glucuronate) + UDP + H(+). The catalysed reaction is 16alpha,17alpha-estriol + UDP-alpha-D-glucuronate = 16alpha,17alpha-estriol 16-O-(beta-D-glucuronate) + UDP + H(+). It catalyses the reaction 16alpha,17alpha-estriol + UDP-alpha-D-glucuronate = 16alpha,17alpha-estriol 17-O-(beta-D-glucuronate) + UDP + H(+). The enzyme catalyses epitestosterone + UDP-alpha-D-glucuronate = epitestosterone 17-O-(beta-D-glucuronate) + UDP + H(+). It carries out the reaction hyodeoxycholate + UDP-alpha-D-glucuronate = hyodeoxycholate 6-O-(beta-D-glucuronate) + UDP + H(+). The catalysed reaction is hyocholate + UDP-alpha-D-glucuronate = hyocholate 6-O-(beta-D-glucuronate) + UDP + H(+). It catalyses the reaction all-trans-retinoate + UDP-alpha-D-glucuronate = all-trans-retinoyl-1-O-(beta-D-glucuronate) + UDP. The enzyme catalyses all-trans-4-hydroxyretinoate + UDP-alpha-D-glucuronate = all-trans-4-hydroxy-4-O-(beta-D-glucuronide)-retinoate + UDP + H(+). It carries out the reaction (E)-ferulate + UDP-alpha-D-glucuronate = (E)-ferulic acid beta-D-glucuronate ester + UDP. The catalysed reaction is 8-iso-prostaglandin F2alpha + UDP-alpha-D-glucuronate = 8-iso-prostaglandin F2alpha-glucuronide + UDP + H(+). It catalyses the reaction 5-epi-5-F2t-IsoP + UDP-alpha-D-glucuronate = 5-epi-5-F2t-IsoP-glucuronide + UDP + H(+). The enzyme catalyses (5Z,8Z,11Z,14Z)-eicosatetraenoate + UDP-alpha-D-glucuronate = O-[(5Z),(8Z),(11Z),(14Z)-eicosatetraenoyl]-beta-D-glucuronate + UDP. It carries out the reaction 15-hydroxy-(5Z,8Z,11Z,13E)-eicosatetraenoate + UDP-alpha-D-glucuronate = 15-O-(beta-D-glucuronosyl)-(5Z,8Z,11Z,14Z)-eicosatetraenoate + UDP + H(+). The catalysed reaction is 20-hydroxy-(5Z,8Z,11Z,14Z)-eicosatetraenoate + UDP-alpha-D-glucuronate = 20-O-(beta-D-glucuronosyl)-(5Z,8Z,11Z,14Z)-eicosatetraenoate + UDP + H(+). It catalyses the reaction (E)-ferulate + UDP-alpha-D-glucuronate = (E)-4-O-(beta-D-glucuronosyl)-ferulate + UDP + H(+). The enzyme catalyses prostaglandin B1 + UDP-alpha-D-glucuronate = 15-O-(beta-D-glucuronosyl)-prostaglandin B1 + UDP + H(+). It carries out the reaction mycophenolate + UDP-alpha-D-glucuronate = mycophenolic acid O-acyl-beta-D-glucuronide + UDP. The catalysed reaction is losartan + UDP-alpha-D-glucuronate = losartan-2-N-beta-D-glucuronide + UDP. It catalyses the reaction candesartan + UDP-alpha-D-glucuronate = candesartan O-beta-D-glucuronoside + UDP. The enzyme catalyses candesartan + UDP-alpha-D-glucuronate = candesartan-2-N-beta-D-glucuronide + UDP. It carries out the reaction zolasartan + UDP-alpha-D-glucuronate = zolarsartan O-beta-D-glucuronoside + UDP. Its function is as follows. UDP-glucuronosyltransferase (UGT) that catalyzes phase II biotransformation reactions in which lipophilic substrates are conjugated with glucuronic acid to increase the metabolite's water solubility, thereby facilitating excretion into either the urine or bile. Essential for the elimination and detoxification of drugs, xenobiotics and endogenous compounds. Catalyzes the glucuronidation of endogenous steroid hormones such as androgens (epitestosterone, androsterone) and estrogens (estradiol, epiestradiol, estriol, catechol estrogens). Also regulates the levels of retinoic acid, a major metabolite of vitamin A involved in apoptosis, cellular growth and differentiation, and embryonic development. Contributes to bile acid (BA) detoxification by catalyzing the glucuronidation of BA substrates, which are natural detergents for dietary lipids absorption. Involved in the glucuronidation of arachidonic acid (AA) and AA-derived eicosanoids including 15-HETE, 20-HETE, PGE2, PGB1 and F2-isoprostanes (8-iso-PGF2alpha and 5-epi-5-F2t-IsoP). Involved in the glucuronidation of the phytochemical ferulic acid at the phenolic or the carboxylic acid group. Involved in the glucuronidation of the AGTR1 angiotensin receptor antagonist losartan, caderastan and zolarsatan, drugs which can inhibit the effect of angiotensin II. Also metabolizes mycophenolate, an immunosuppressive agent. The chain is UDP-glucuronosyltransferase 2B7 from Homo sapiens (Human).